The following is a 165-amino-acid chain: Protein-export protein SecB (165 aa).

It belongs to the SecB family. As to quaternary structure, homotetramer, a dimer of dimers. One homotetramer interacts with 1 SecA dimer.

The protein resides in the cytoplasm. One of the proteins required for the normal export of preproteins out of the cell cytoplasm. It is a molecular chaperone that binds to a subset of precursor proteins, maintaining them in a translocation-competent state. It also specifically binds to its receptor SecA. This Ruegeria pomeroyi (strain ATCC 700808 / DSM 15171 / DSS-3) (Silicibacter pomeroyi) protein is Protein-export protein SecB.